A 221-amino-acid chain; its full sequence is UPF0319 protein CGSHiGG_02140 (221 aa).

An N-terminal signal peptide occupies residues Met-1–Ala-21.

This sequence belongs to the UPF0319 family.

The sequence is that of UPF0319 protein CGSHiGG_02140 from Haemophilus influenzae (strain PittGG).